The sequence spans 235 residues: Uridylate kinase (235 aa).

8-11 (KLSG) contributes to the ATP binding site. G49 contacts UMP. ATP-binding residues include G50 and R54. 131 to 138 (TGNPYFST) is a UMP binding site. Residues N159, Y165, and D168 each coordinate ATP.

The protein belongs to the UMP kinase family. As to quaternary structure, homohexamer.

It localises to the cytoplasm. The enzyme catalyses UMP + ATP = UDP + ADP. It functions in the pathway pyrimidine metabolism; CTP biosynthesis via de novo pathway; UDP from UMP (UMPK route): step 1/1. With respect to regulation, inhibited by UTP. In terms of biological role, catalyzes the reversible phosphorylation of UMP to UDP. The chain is Uridylate kinase from Mycoplasma pneumoniae (strain ATCC 29342 / M129 / Subtype 1) (Mycoplasmoides pneumoniae).